Consider the following 339-residue polypeptide: GDP-fucose transporter 1 (339 aa).

The next 8 helical transmembrane spans lie at 9–29, 45–65, 82–102, 111–133, 136–156, 165–185, 209–229, and 237–257; these read SVRIAAVVAAYWTISISLVFL, LFVTWYQCVVTVICLFFLSLL, LSVAKQVLPLSAVFVGMITFN, VSFYNVGRSLTTVFNVICTYVIL, STSYKAVICCAVIIGGFLMGV, ISYSGVLFGVLASLCVSLNAI, ACFLFLPLMALLGEIGEVAHF, and FWLMMTIGGVFGIAIGYITGL. A disordered region spans residues 319 to 339; sequence AHTIQASKDDKALQEDGQTKV. Positions 325 to 339 are enriched in basic and acidic residues; that stretch reads SKDDKALQEDGQTKV.

Belongs to the TPT transporter family. SLC35C subfamily.

Its subcellular location is the golgi apparatus membrane. The enzyme catalyses GMP(out) + GDP-beta-L-fucose(in) = GMP(in) + GDP-beta-L-fucose(out). Antiporter specific for GDP-l-fucose and depending on the concomitant reverse transport of GMP. Involved in GDP-fucose import from the cytoplasm into the Golgi lumen. This chain is GDP-fucose transporter 1 (slc35c1), found in Nematostella vectensis (Starlet sea anemone).